The primary structure comprises 222 residues: Triosephosphate isomerase (222 aa).

Asparagine 10 to lysine 12 contacts substrate. The Electrophile role is filled by histidine 93. Residue glutamate 141 is the Proton acceptor of the active site. Residues isoleucine 146, glycine 180, and alanine 201–serine 202 each bind substrate.

The protein belongs to the triosephosphate isomerase family. Homotetramer; dimer of dimers.

The protein localises to the cytoplasm. It carries out the reaction D-glyceraldehyde 3-phosphate = dihydroxyacetone phosphate. Its pathway is carbohydrate biosynthesis; gluconeogenesis. The protein operates within carbohydrate degradation; glycolysis; D-glyceraldehyde 3-phosphate from glycerone phosphate: step 1/1. In terms of biological role, involved in the gluconeogenesis. Catalyzes stereospecifically the conversion of dihydroxyacetone phosphate (DHAP) to D-glyceraldehyde-3-phosphate (G3P). This is Triosephosphate isomerase from Cenarchaeum symbiosum (strain A).